The following is a 182-amino-acid chain: Gas vesicle protein H1 (182 aa).

Acidic residues predominate over residues 1–11 (MVPDENDDASD). Disordered stretches follow at residues 1–21 (MVPDENDDASDDQSSQLSGLL) and 65–106 (GRAD…GGTS). Residues 12–21 (DQSSQLSGLL) show a composition bias toward low complexity. Residues 92-101 (TTEDSIHVET) show a composition bias toward basic and acidic residues.

The protein belongs to the gas vesicle GvpH family. GvpF to GvpM interact with each other in vitro, and may form multi-subunit complex(es). Interacts with GvpC1. Might interact with GvpA1.

The protein resides in the cytoplasm. It localises to the gas vesicle. Functionally, proteins GvpF to GvpM might be involved in nucleating gas vesicle formation. May be important for the stability of gas vesicles. Gas vesicles are hollow, gas filled proteinaceous nanostructures found in several microbial planktonic microorganisms. They allow positioning of halobacteria at the optimal depth for growth in the poorly aerated, shallow brine pools of their habitat. In terms of biological role, expression of a 9.5 kb p-vac DNA fragment containing 2 divergently transcribed regions (gvpD-gvpE-gvpF-gvpG-gvpH-gvpI-gvpJ-gvpK-gvpL-gvpM and gvpA-gvpC-gvpN-gvpO) allows H.volcanii to produce gas vesicles. A similar region restores gas vesicle production in H.halobium without the p-vac locus, but it still has the c-vac locus. This Halobacterium salinarum (strain ATCC 700922 / JCM 11081 / NRC-1) (Halobacterium halobium) protein is Gas vesicle protein H1 (gvpH11).